The following is a 76-amino-acid chain: Alpha-amylase inhibitor Z-2685 (76 aa).

2 disulfide bridges follow: cysteine 9–cysteine 25 and cysteine 43–cysteine 70.

Functionally, inhibits mammalian alpha-amylases specifically but has no action on plant and microbial alpha-amylases. This chain is Alpha-amylase inhibitor Z-2685, found in Streptomyces rochei (Streptomyces parvullus).